The primary structure comprises 127 residues: Small ribosomal subunit protein uS11 (127 aa).

The protein belongs to the universal ribosomal protein uS11 family. In terms of assembly, part of the 30S ribosomal subunit. Interacts with proteins S7 and S18. Binds to IF-3.

Located on the platform of the 30S subunit, it bridges several disparate RNA helices of the 16S rRNA. Forms part of the Shine-Dalgarno cleft in the 70S ribosome. The protein is Small ribosomal subunit protein uS11 of Streptococcus thermophilus (strain CNRZ 1066).